Reading from the N-terminus, the 128-residue chain is DNA-directed RNA polymerase subunit omega (128 aa).

Positions 87–106 are disordered; it reads ARSSQAAPKSAPGQEIGKSF.

Belongs to the RNA polymerase subunit omega family. In terms of assembly, the RNAP catalytic core consists of 2 alpha, 1 beta, 1 beta' and 1 omega subunit. When a sigma factor is associated with the core the holoenzyme is formed, which can initiate transcription.

It catalyses the reaction RNA(n) + a ribonucleoside 5'-triphosphate = RNA(n+1) + diphosphate. Functionally, promotes RNA polymerase assembly. Latches the N- and C-terminal regions of the beta' subunit thereby facilitating its interaction with the beta and alpha subunits. In Anaplasma marginale (strain St. Maries), this protein is DNA-directed RNA polymerase subunit omega.